Consider the following 649-residue polypeptide: MGSFCSKSLGINFGSEYSGSSVADDGREPDFGHSQPNGQTSLIVPGMRQLMVKDVKEQNQLKDVFSFREREAEDNFYDGIPTYTMAPSQKIRSAKSTQTAVSKVTEASKLLGKAGLGRAKDVLDTLGSSMTDLSSGGFTSGVATKGNELGILAFEVANTIVKSSNLIESLSKRNIEHLKGTILYSEGVQNLVSNDFDELLRLVAADKRQELQVFSGEVVRFGNRSKDFQWHNLQRYFDRISKELTPQRQLKEDAVLVVDQLMVLVQYTAELYQELQVLYRLEKDYEQKRREEENSANSSKGDGLAILKTELKAQRKVVKSLKKKSLWSRGFEEVMEKLVDIVHFLLLEIHNIFGGADDQPSKKGAAEYDKRLGPAGLALHYANIIVQIDTLVARASSITSNARDSLYQSLPPGIKLALRSKIKSFNVDKELSVTQIKDEMERTLHWLVPVAGNTTKAHHGFGWVGEWANTGTDFTSKPSGGDILRIETLYHASKEKTEIYILGQIIWLQHLVTKAKSDARGGPRLSSIKSPLDTTNQQLISEPLSVPIVTDEEQKMLQEASKRKRTPCVSKSQDFDSEYSRARKCDPLSKSSEYFRGVRRSKSAAVKRYSSGFPLLDFAIDKEKVLDVIDRVDVPRDYKALLKEGSLSF.

Gly2 carries N-myristoyl glycine lipidation. The tract at residues 18-43 (SGSSVADDGREPDFGHSQPNGQTSLI) is disordered.

It localises to the nucleus. Functionally, promotes plant growth, especially at the vegetative stage, probably via the regulation of phytosulfokine (PSK) signaling; PSK are peptide phytohormones acting as growth factors. Together with PSI2 and PSI3, required during vegetative growth and reproduction. May also have a function in carbohydrate metabolism. This chain is Protein PSK SIMULATOR 3, found in Arabidopsis thaliana (Mouse-ear cress).